We begin with the raw amino-acid sequence, 689 residues long: Glycine--tRNA ligase beta subunit (689 aa).

It belongs to the class-II aminoacyl-tRNA synthetase family. As to quaternary structure, tetramer of two alpha and two beta subunits.

It localises to the cytoplasm. It catalyses the reaction tRNA(Gly) + glycine + ATP = glycyl-tRNA(Gly) + AMP + diphosphate. The polypeptide is Glycine--tRNA ligase beta subunit (Shewanella pealeana (strain ATCC 700345 / ANG-SQ1)).